The chain runs to 1761 residues: Lysine-specific demethylase 3B (1761 aa).

The residue at position 2 (Ala2) is an N-acetylalanine. The tract at residues 253-346 (DNSAPQSEGG…QRAKQPPSTF (94 aa)) is disordered. The segment covering 298–309 (ASKKLKGDRGEV) has biased composition (basic and acidic residues). Lys361 is subject to N6-acetyllysine. Disordered regions lie at residues 370-394 (QDEPVGGDTPASFTPYSTATGQTPL) and 438-496 (DTGL…NGVL). Composition is skewed to polar residues over residues 380 to 392 (ASFTPYSTATGQT), 453 to 468 (SRSQASGENSRNSILA), and 477 to 495 (PSSSQPLTFGSGRSQSNGV). Ser492, Ser546, Ser556, and Ser560 each carry phosphoserine. Positions 572–603 (RSVLGTDTKPGSKAGSSVDRKVPAESMPTLTP) are disordered. A Phosphothreonine modification is found at Thr614. The segment at 714–762 (GPSLSAMGNGRSSSPTSSLTQPIEMPTLSSSPTEERPTVGPGQQDNPLL) is disordered. The segment covering 723–745 (GRSSSPTSSLTQPIEMPTLSSSP) has biased composition (polar residues). 4 positions are modified to phosphoserine: Ser766, Ser773, Ser778, and Ser779. Lys788 participates in a covalent cross-link: Glycyl lysine isopeptide (Lys-Gly) (interchain with G-Cter in SUMO2). Ser798 carries the post-translational modification Phosphoserine. Positions 805–827 (ACRQDSDSSTNSDLSDLSDSEEQ) are disordered. The C6-type zinc finger occupies 1031-1056 (CDVCETTLFNIHWVCRKCGFGVCLDC). Residues 1142 to 1161 (GMSQLPSINPSASSGNETTF) show a composition bias toward polar residues. Residues 1142 to 1220 (GMSQLPSINP…PCPDTAPPSS (79 aa)) form a disordered region. The span at 1174–1193 (EPDHVPKADSTDIRSEEPLK) shows a compositional bias: basic and acidic residues. Positions 1194–1204 (TDSSASNSNSE) are enriched in polar residues. Phosphoserine is present on residues Ser1253 and Ser1259. An LXXLL motif motif is present at residues 1293–1297 (LRDLL). One can recognise a JmjC domain in the interval 1498 to 1721 (MPTRFEDLME…HCFRLTQEFR (224 aa)). 3 residues coordinate Fe cation: His1560, Asp1562, and His1689.

Belongs to the JHDM2 histone demethylase family. Requires Fe(2+) as cofactor. As to expression, ubiquitous. Highly expressed in placenta, skeletal muscle, kidney, heart and liver.

The protein resides in the nucleus. The catalysed reaction is N(6),N(6)-dimethyl-L-lysyl(9)-[histone H3] + 2 2-oxoglutarate + 2 O2 = L-lysyl(9)-[histone H3] + 2 formaldehyde + 2 succinate + 2 CO2. Histone demethylase that specifically demethylates 'Lys-9' of histone H3, thereby playing a central role in histone code. Demethylation of Lys residue generates formaldehyde and succinate. May have tumor suppressor activity. The protein is Lysine-specific demethylase 3B (KDM3B) of Homo sapiens (Human).